We begin with the raw amino-acid sequence, 353 residues long: Feruloyl esterase B (353 aa).

A signal peptide spans 1 to 18 (MAIPLVLVLAWLLPVVLA). Positions 19-291 (ASLTQVNNFG…VSVVLDWFGI (273 aa)) are catalytic. Catalysis depends on serine 136, which acts as the Charge relay system. N-linked (GlcNAc...) asparagine glycosylation is found at asparagine 179 and asparagine 246. A CBM1 domain is found at 317–353 (CTAAHWAQCGGIGYSGCTACASPYTCQKANDYYSQCL).

This sequence belongs to the carbohydrate esterase 1 (CE1) family. Feruloyl esterase type B subfamily. Glycosylated.

Its subcellular location is the secreted. It catalyses the reaction feruloyl-polysaccharide + H2O = ferulate + polysaccharide.. Inhibited by the specific serine esterase inhibitor AEBSF. In terms of biological role, involved in degradation of plant cell walls. Hydrolyzes the feruloyl-arabinose ester bond in arabinoxylans, and the feruloyl-galactose and feruloyl-arabinose ester bonds in pectin. Binds strongly to cellulose. This Talaromyces funiculosus (Fruitlet core rot fungus) protein is Feruloyl esterase B (FAEB).